The primary structure comprises 352 residues: Fe(3+) ions import ATP-binding protein FbpC (352 aa).

An ABC transporter domain is found at Leu-5–Ile-239. An ATP-binding site is contributed by Gly-37–Thr-44.

This sequence belongs to the ABC transporter superfamily. Fe(3+) ion importer (TC 3.A.1.10) family. The complex is composed of two ATP-binding proteins (FbpC), two transmembrane proteins (FbpB) and a solute-binding protein (FbpA).

It is found in the cell inner membrane. The enzyme catalyses Fe(3+)(out) + ATP + H2O = Fe(3+)(in) + ADP + phosphate + H(+). Its function is as follows. Part of the ABC transporter complex FbpABC involved in Fe(3+) ions import. Responsible for energy coupling to the transport system. The chain is Fe(3+) ions import ATP-binding protein FbpC from Neisseria gonorrhoeae (strain ATCC 700825 / FA 1090).